A 310-amino-acid polypeptide reads, in one-letter code: Malate dehydrogenase (310 aa).

Residues 7 to 12 and Asp-32 each bind NAD(+); that span reads GAGHVG. Arg-81 and Arg-87 together coordinate substrate. Residues Asn-94 and 117–119 each bind NAD(+); that span reads VSN. Residues Asn-119 and Arg-150 each contribute to the substrate site. The Proton acceptor role is filled by His-174.

This sequence belongs to the LDH/MDH superfamily. MDH type 3 family.

The enzyme catalyses (S)-malate + NAD(+) = oxaloacetate + NADH + H(+). Catalyzes the reversible oxidation of malate to oxaloacetate. The chain is Malate dehydrogenase from Chlorobium phaeobacteroides (strain BS1).